Reading from the N-terminus, the 547-residue chain is Chaperonin GroEL 1 (547 aa).

ATP-binding positions include 30 to 33 (TLGP), lysine 51, 87 to 91 (DGTTT), glycine 415, 479 to 481 (NAA), and aspartate 495.

Belongs to the chaperonin (HSP60) family. Forms a cylinder of 14 subunits composed of two heptameric rings stacked back-to-back. Interacts with the co-chaperonin GroES.

It is found in the cytoplasm. It carries out the reaction ATP + H2O + a folded polypeptide = ADP + phosphate + an unfolded polypeptide.. Functionally, together with its co-chaperonin GroES, plays an essential role in assisting protein folding. The GroEL-GroES system forms a nano-cage that allows encapsulation of the non-native substrate proteins and provides a physical environment optimized to promote and accelerate protein folding. In Vibrio parahaemolyticus serotype O3:K6 (strain RIMD 2210633), this protein is Chaperonin GroEL 1.